Consider the following 103-residue polypeptide: A-type ATP synthase subunit F (103 aa).

It belongs to the V-ATPase F subunit family. Has multiple subunits with at least A(3), B(3), C, D, E, F, H, I and proteolipid K(x).

It localises to the cell membrane. Its function is as follows. Component of the A-type ATP synthase that produces ATP from ADP in the presence of a proton gradient across the membrane. The chain is A-type ATP synthase subunit F from Pyrococcus furiosus (strain ATCC 43587 / DSM 3638 / JCM 8422 / Vc1).